Consider the following 445-residue polypeptide: Xylose isomerase (445 aa).

Active-site residues include H107 and D110. The Mg(2+) site is built by E238, E274, H277, D302, D313, D315, and D345.

This sequence belongs to the xylose isomerase family. In terms of assembly, homotetramer. Mg(2+) serves as cofactor.

It localises to the cytoplasm. The enzyme catalyses alpha-D-xylose = alpha-D-xylulofuranose. This chain is Xylose isomerase, found in Bacillus cereus (strain ATCC 10987 / NRS 248).